A 325-amino-acid chain; its full sequence is Elongation factor P--(R)-beta-lysine ligase (325 aa).

Position 76-78 (Ser76–Glu78) interacts with substrate. ATP contacts are provided by residues Arg100–Glu102 and Asn109. Tyr118 is a binding site for substrate. Glu244–Leu245 is a binding site for ATP. Substrate is bound at residue Glu251. ATP is bound at residue Gly300.

This sequence belongs to the class-II aminoacyl-tRNA synthetase family. EpmA subfamily. Homodimer.

The enzyme catalyses D-beta-lysine + L-lysyl-[protein] + ATP = N(6)-((3R)-3,6-diaminohexanoyl)-L-lysyl-[protein] + AMP + diphosphate + H(+). Functionally, with EpmB is involved in the beta-lysylation step of the post-translational modification of translation elongation factor P (EF-P). Catalyzes the ATP-dependent activation of (R)-beta-lysine produced by EpmB, forming a lysyl-adenylate, from which the beta-lysyl moiety is then transferred to the epsilon-amino group of a conserved specific lysine residue in EF-P. This chain is Elongation factor P--(R)-beta-lysine ligase, found in Klebsiella pneumoniae subsp. pneumoniae (strain ATCC 700721 / MGH 78578).